Here is a 60-residue protein sequence, read N- to C-terminus: RICYSHKASLPRATKTCVENTCYKMFIRTHRQYISERGCGCPTAMWPYQTECCKGDRCNK.

4 disulfide bridges follow: Cys3–Cys22, Cys17–Cys39, Cys41–Cys52, and Cys53–Cys58. The segment at 41 to 48 (CPTAMWPY) is important for binding to L-type calcium channels.

This sequence belongs to the three-finger toxin family. Short-chain subfamily. L-type calcium blocker sub-subfamily. Expressed by the venom gland.

It is found in the secreted. Functionally, specific blocker of the voltage-dependent L-type calcium channel (Cav1/CACNA1). Inhibits cardiac contractions. The chain is Toxin FS-2 from Dendroaspis polylepis polylepis (Black mamba).